The primary structure comprises 315 residues: MIKLGIVMDPIANINIKKDSSFAMLLEAQRRGYELHYMEMGDLYLINGEARAHTRTLNVKQNYEEWFSFVGEQDLPLADLDVILMRKDPPFDTEFIYATYILERAEEKGTLIVNKPQSLRDCNEKLFTAWFSDLTPETLVTRNKAQLKAFWEKHSDIILKPLDGMGGASIFRVKEGDPNLGVIAETLTEHGTRYCMAQNYLPAIKDGDKRVLVVDGEPVPYCLARIPQGGETRGNLAAGGRGEPRPLTESDWKIARQIGPTLKEKGLIFVGLDIIGDRLTEINVTSPTCIREIEAEFPVSITGMLMDAIEARLQQ.

One can recognise an ATP-grasp domain in the interval 125–310 (KLFTAWFSDL…ITGMLMDAIE (186 aa)). 151–207 (WEKHSDIILKPLDGMGGASIFRVKEGDPNLGVIAETLTEHGTRYCMAQNYLPAIKDG) contacts ATP. Mg(2+) contacts are provided by Glu281 and Asn283.

It belongs to the prokaryotic GSH synthase family. The cofactor is Mg(2+). It depends on Mn(2+) as a cofactor.

The catalysed reaction is gamma-L-glutamyl-L-cysteine + glycine + ATP = glutathione + ADP + phosphate + H(+). It participates in sulfur metabolism; glutathione biosynthesis; glutathione from L-cysteine and L-glutamate: step 2/2. This is Glutathione synthetase from Escherichia coli O157:H7.